Here is a 244-residue protein sequence, read N- to C-terminus: Octanoyltransferase (244 aa).

A BPL/LPL catalytic domain is found at 49 to 237; that stretch reads VAPGNFLIFC…HLTALFELHI (189 aa). Residues 94–101, 167–169, and 180–182 each bind substrate; these read RGGDITYH, AMG, and GFA. Cys-198 (acyl-thioester intermediate) is an active-site residue.

Belongs to the LipB family.

The protein localises to the cytoplasm. It carries out the reaction octanoyl-[ACP] + L-lysyl-[protein] = N(6)-octanoyl-L-lysyl-[protein] + holo-[ACP] + H(+). Its pathway is protein modification; protein lipoylation via endogenous pathway; protein N(6)-(lipoyl)lysine from octanoyl-[acyl-carrier-protein]: step 1/2. Catalyzes the transfer of endogenously produced octanoic acid from octanoyl-acyl-carrier-protein onto the lipoyl domains of lipoate-dependent enzymes. Lipoyl-ACP can also act as a substrate although octanoyl-ACP is likely to be the physiological substrate. The polypeptide is Octanoyltransferase (Cytophaga hutchinsonii (strain ATCC 33406 / DSM 1761 / CIP 103989 / NBRC 15051 / NCIMB 9469 / D465)).